The following is a 75-amino-acid chain: uncharacterized protein (75 aa).

The first 26 residues, 1-26 (MQFLERHFSVLFPVLFFFSFYPISFA), serve as a signal peptide directing secretion.

The protein localises to the secreted. This is an uncharacterized protein from Schizosaccharomyces pombe (strain 972 / ATCC 24843) (Fission yeast).